Here is a 642-residue protein sequence, read N- to C-terminus: Threonine--tRNA ligase (642 aa).

The region spanning 1-63 is the TGS domain; it reads MNDITVTLPD…YNDARVVIVT (63 aa). The catalytic stretch occupies residues 242–533; that stretch reads DHRKIGQELD…LIEHFNGKFP (292 aa). Positions 334, 385, and 510 each coordinate Zn(2+).

It belongs to the class-II aminoacyl-tRNA synthetase family. In terms of assembly, homodimer. The cofactor is Zn(2+).

The protein localises to the cytoplasm. It carries out the reaction tRNA(Thr) + L-threonine + ATP = L-threonyl-tRNA(Thr) + AMP + diphosphate + H(+). Functionally, catalyzes the attachment of threonine to tRNA(Thr) in a two-step reaction: L-threonine is first activated by ATP to form Thr-AMP and then transferred to the acceptor end of tRNA(Thr). The polypeptide is Threonine--tRNA ligase (Haloquadratum walsbyi (strain DSM 16790 / HBSQ001)).